The sequence spans 181 residues: MILVVGLGNIGVEYENTRHNVGFMLIDLLLKESNFTNLTNSKFKGELFKIGSSLLLLKPSTYMNNSGLSVKAVNDFYKCERMIVIHDDIDINLGALRFKKGGSSGGHNGLKSIDTLCGNDYERVRIGVGKGENVISHVLGKFKSEEEITLSKVLEHTKKALLELIENDDLSAISSKYSLKA.

Tyrosine 14 provides a ligand contact to tRNA. Histidine 19 functions as the Proton acceptor in the catalytic mechanism. TRNA contacts are provided by tyrosine 62, asparagine 64, and asparagine 108.

Belongs to the PTH family. In terms of assembly, monomer.

Its subcellular location is the cytoplasm. The catalysed reaction is an N-acyl-L-alpha-aminoacyl-tRNA + H2O = an N-acyl-L-amino acid + a tRNA + H(+). In terms of biological role, hydrolyzes ribosome-free peptidyl-tRNAs (with 1 or more amino acids incorporated), which drop off the ribosome during protein synthesis, or as a result of ribosome stalling. Its function is as follows. Catalyzes the release of premature peptidyl moieties from peptidyl-tRNA molecules trapped in stalled 50S ribosomal subunits, and thus maintains levels of free tRNAs and 50S ribosomes. The polypeptide is Peptidyl-tRNA hydrolase (Campylobacter jejuni subsp. jejuni serotype O:23/36 (strain 81-176)).